Here is a 1087-residue protein sequence, read N- to C-terminus: Exportin-7-B (1087 aa).

In terms of domain architecture, Importin N-terminal spans 30-96; it reads AEKALVEFTN…RNYVLTYLAT (67 aa).

Belongs to the exportin family.

Its subcellular location is the cytoplasm. It localises to the nucleus. Mediates the nuclear export of proteins (cargos) with broad substrate specificity. The sequence is that of Exportin-7-B (xpo7-b) from Xenopus laevis (African clawed frog).